The sequence spans 286 residues: Bifunctional protein FolD (286 aa).

Residues 166 to 168 (GAS) and isoleucine 232 each bind NADP(+).

It belongs to the tetrahydrofolate dehydrogenase/cyclohydrolase family. As to quaternary structure, homodimer.

It carries out the reaction (6R)-5,10-methylene-5,6,7,8-tetrahydrofolate + NADP(+) = (6R)-5,10-methenyltetrahydrofolate + NADPH. The catalysed reaction is (6R)-5,10-methenyltetrahydrofolate + H2O = (6R)-10-formyltetrahydrofolate + H(+). It participates in one-carbon metabolism; tetrahydrofolate interconversion. Its function is as follows. Catalyzes the oxidation of 5,10-methylenetetrahydrofolate to 5,10-methenyltetrahydrofolate and then the hydrolysis of 5,10-methenyltetrahydrofolate to 10-formyltetrahydrofolate. This is Bifunctional protein FolD from Vibrio parahaemolyticus serotype O3:K6 (strain RIMD 2210633).